The sequence spans 298 residues: MSKSSVFDSVIDLPQRELTERENILLGFESRYESVHNQLNLLLNQGQLLDWSKKYHKSVLPLCKLVAEQYPLVIFHGDVGTGKTATAECIANRIVRESRTEDSALFKLSNRVRGSGKVGEMGTLLTQAWAEVCEAAGKNRRAILIIDEGDSIAASRSQNHSHHEDKVAVNTLIQGVDELRKFGGRVVVILCTNRLSVLDPALRRRAAIVEEFTRPGLTERESLFRMDLGGMGLSDSQYRQLALATGEKEHLPAWTYSDIRTRLYPAAMSRAFPERALSFNDLMELLKIMRPSPVMGDI.

ATP-binding positions include 80-85 (GTGKTA) and 204-205 (RR).

The protein belongs to the AAA ATPase family. In terms of assembly, homohexamer, forms a 1:1:6 CdnC:Cap7:Cap6 complex.

In terms of biological role, regulates complex assembly in a CBASS antivirus system. CBASS (cyclic oligonucleotide-based antiphage signaling system) provides immunity against bacteriophage. The CD-NTase protein synthesizes cyclic nucleotides in response to infection; these serve as specific second messenger signals. The signals activate a diverse range of effectors, leading to bacterial cell death and thus abortive phage infection. A type III CBASS system. Expression of this CBASS system (Cap18-Cap6-Cap7-CdnC-CapW-Cap17) in a susceptible E.coli (strain MG1655) confers resistance to bacteriophage P1. Binds and disassembles an active CdnC:Cap7 complex, inhibiting the complex's ability to synthesize cyclic nucleotide second messengers. An AAA+-ATPase remodeler, in the absence of foreign threat Cap6 probably maintains the Cap7 protein in its open, inactive state. Once activated (presumably by a bacteriophage protein) Cap7 binds to and activates its cognate CD-NTase (CdnC in this bacteria) to synthesize a cyclic nucleotide second messenger which leads to abortive phage infection. This chain is CD-NTase-associated protein 6, found in Escherichia coli (strain KTE188).